The chain runs to 200 residues: Dephospho-CoA kinase (200 aa).

In terms of domain architecture, DPCK spans Val4 to Gly200. Residue Ala12–Thr17 participates in ATP binding.

This sequence belongs to the CoaE family.

It is found in the cytoplasm. The catalysed reaction is 3'-dephospho-CoA + ATP = ADP + CoA + H(+). It participates in cofactor biosynthesis; coenzyme A biosynthesis; CoA from (R)-pantothenate: step 5/5. Functionally, catalyzes the phosphorylation of the 3'-hydroxyl group of dephosphocoenzyme A to form coenzyme A. The chain is Dephospho-CoA kinase from Lactobacillus acidophilus (strain ATCC 700396 / NCK56 / N2 / NCFM).